Reading from the N-terminus, the 122-residue chain is Large ribosomal subunit protein uL18 (122 aa).

It belongs to the universal ribosomal protein uL18 family. Part of the 50S ribosomal subunit; part of the 5S rRNA/L5/L18/L25 subcomplex. Contacts the 5S and 23S rRNAs.

Functionally, this is one of the proteins that bind and probably mediate the attachment of the 5S RNA into the large ribosomal subunit, where it forms part of the central protuberance. This chain is Large ribosomal subunit protein uL18, found in Dictyoglomus thermophilum (strain ATCC 35947 / DSM 3960 / H-6-12).